We begin with the raw amino-acid sequence, 251 residues long: 5'-nucleotidase SurE (251 aa).

Residues D8, D9, S39, and N95 each coordinate a divalent metal cation.

The protein belongs to the SurE nucleotidase family. The cofactor is a divalent metal cation.

The protein localises to the cytoplasm. The enzyme catalyses a ribonucleoside 5'-phosphate + H2O = a ribonucleoside + phosphate. Functionally, nucleotidase that shows phosphatase activity on nucleoside 5'-monophosphates. In Clostridium botulinum (strain Eklund 17B / Type B), this protein is 5'-nucleotidase SurE.